The chain runs to 498 residues: Osteoclast stimulatory transmembrane protein (498 aa).

Residues Met1–Gln51 are Cytoplasmic-facing. Residues Leu52–Ser72 traverse the membrane as a helical segment. Topologically, residues Leu73–Pro81 are extracellular. Residues Ala82–Ile102 traverse the membrane as a helical segment. The Cytoplasmic segment spans residues Arg103 to Leu121. The chain crosses the membrane as a helical span at residues Leu122–Val142. Topologically, residues Arg143–Arg226 are extracellular. Residues Val227 to Tyr247 traverse the membrane as a helical segment. The Cytoplasmic portion of the chain corresponds to Leu248–Gly303. A helical membrane pass occupies residues Leu304 to Leu324. The Extracellular portion of the chain corresponds to Leu325–Ala401. A helical transmembrane segment spans residues Leu402–Trp422. The Cytoplasmic segment spans residues Arg423 to Glu498. The interval Gln449–Glu498 is disordered. A compositionally biased stretch (polar residues) spans Gly476–Pro485.

In terms of tissue distribution, expressed in osteoclast (at protein level). Ubiquitous. Highly expressed in multi-nuclear osteoclast cells compared to mono-nuclear macrophages. Expressed in foreign body giant cells (FBGCs).

The protein resides in the membrane. Probable cell surface receptor that plays a role in cellular fusion and cell differentiation. Cooperates with DCSTAMP in modulating cell-cell fusion in both osteoclasts and foreign body giant cells (FBGCs). Involved in osteoclast bone resorption. Promotes osteoclast differentiation and may play a role in the multinucleated osteoclast maturation. This chain is Osteoclast stimulatory transmembrane protein (Ocstamp), found in Mus musculus (Mouse).